Consider the following 227-residue polypeptide: Uracil phosphoribosyltransferase (227 aa).

36-40 is a binding site for GTP; the sequence is KGLVK. Residues Arg86, Arg111, and 145 to 153 each bind 5-phospho-alpha-D-ribose 1-diphosphate; that span reads DPMLATGST. Uracil is bound by residues Ile212 and 217–219; that span reads GDA. Asp218 contacts 5-phospho-alpha-D-ribose 1-diphosphate.

Belongs to the UPRTase family. The cofactor is Mg(2+).

It carries out the reaction UMP + diphosphate = 5-phospho-alpha-D-ribose 1-diphosphate + uracil. It participates in pyrimidine metabolism; UMP biosynthesis via salvage pathway; UMP from uracil: step 1/1. Its activity is regulated as follows. Allosterically activated by GTP. Catalyzes the conversion of uracil and 5-phospho-alpha-D-ribose 1-diphosphate (PRPP) to UMP and diphosphate. This chain is Uracil phosphoribosyltransferase, found in Halobacterium salinarum (strain ATCC 700922 / JCM 11081 / NRC-1) (Halobacterium halobium).